We begin with the raw amino-acid sequence, 354 residues long: UDP-3-O-acylglucosamine N-acyltransferase (354 aa).

The active-site Proton acceptor is the His245.

The protein belongs to the transferase hexapeptide repeat family. LpxD subfamily. In terms of assembly, homotrimer.

It catalyses the reaction a UDP-3-O-[(3R)-3-hydroxyacyl]-alpha-D-glucosamine + a (3R)-hydroxyacyl-[ACP] = a UDP-2-N,3-O-bis[(3R)-3-hydroxyacyl]-alpha-D-glucosamine + holo-[ACP] + H(+). Its pathway is bacterial outer membrane biogenesis; LPS lipid A biosynthesis. Catalyzes the N-acylation of UDP-3-O-acylglucosamine using 3-hydroxyacyl-ACP as the acyl donor. Is involved in the biosynthesis of lipid A, a phosphorylated glycolipid that anchors the lipopolysaccharide to the outer membrane of the cell. The protein is UDP-3-O-acylglucosamine N-acyltransferase of Anaeromyxobacter dehalogenans (strain 2CP-1 / ATCC BAA-258).